Here is a 453-residue protein sequence, read N- to C-terminus: Flap endonuclease 1 (453 aa).

An N-domain region spans residues 1–105 (MGIKGLTGLL…SVLAKRFARR (105 aa)). Position 34 (Asp34) interacts with Mg(2+). Residues Arg47 and Arg71 each contribute to the DNA site. Mg(2+) contacts are provided by Asp87, Glu159, Glu161, Asp180, and Asp182. The interval 123-254 (DVDKLARRQV…KTALKLMREH (132 aa)) is I-domain. DNA is bound at residue Glu159. Positions 232 and 234 each coordinate DNA. Asp234 contributes to the Mg(2+) binding site. Disordered stretches follow at residues 273–336 (EEIK…VASS) and 409–453 (RLDG…KSKN). Positions 320–333 (KSPKKKAPAKKKKV) are enriched in basic residues. Residues 406 to 414 (QQGRLDGFF) are interaction with PCNA. Over residues 417–446 (KPKEPAAKDTGKGKGKATKGEKRKAEEKGS) the composition is skewed to basic and acidic residues.

This sequence belongs to the XPG/RAD2 endonuclease family. FEN1 subfamily. In terms of assembly, interacts with PCNA. Three molecules of FEN1 bind to one PCNA trimer with each molecule binding to one PCNA monomer. PCNA stimulates the nuclease activity without altering cleavage specificity. Requires Mg(2+) as cofactor. In terms of processing, phosphorylated. Phosphorylation upon DNA damage induces relocalization to the nuclear plasma.

Its subcellular location is the nucleus. The protein localises to the nucleolus. The protein resides in the nucleoplasm. It localises to the mitochondrion. Its function is as follows. Structure-specific nuclease with 5'-flap endonuclease and 5'-3' exonuclease activities involved in DNA replication and repair. During DNA replication, cleaves the 5'-overhanging flap structure that is generated by displacement synthesis when DNA polymerase encounters the 5'-end of a downstream Okazaki fragment. It enters the flap from the 5'-end and then tracks to cleave the flap base, leaving a nick for ligation. Also involved in the long patch base excision repair (LP-BER) pathway, by cleaving within the apurinic/apyrimidinic (AP) site-terminated flap. Acts as a genome stabilization factor that prevents flaps from equilibrating into structures that lead to duplications and deletions. Also possesses 5'-3' exonuclease activity on nicked or gapped double-stranded DNA, and exhibits RNase H activity. Also involved in replication and repair of rDNA and in repairing mitochondrial DNA. In Cryptococcus neoformans var. neoformans serotype D (strain B-3501A) (Filobasidiella neoformans), this protein is Flap endonuclease 1.